The sequence spans 320 residues: Probable carboxylesterase M8 (320 aa).

The short motif at 52-54 (HGG) is the Involved in the stabilization of the negatively charged intermediate by the formation of the oxyanion hole element. Catalysis depends on residues Ser-137 and His-296.

The protein belongs to the 'GDXG' lipolytic enzyme family.

It carries out the reaction a carboxylic ester + H2O = an alcohol + a carboxylate + H(+). Its pathway is secondary metabolite biosynthesis. Functionally, probable carboxylesterase; part of the gene cluster that mediates the biosynthesis of squalestatin S1 (SQS1, also known as zaragozic acid A), a heavily oxidized fungal polyketide that offers potent cholesterol lowering activity by targeting squalene synthase (SS). SQS1 is composed of a 2,8-dioxobicyclic[3.2.1]octane-3,4,5-tricarboxyclic acid core that is connected to two lipophilic polyketide arms. These initial steps feature the priming of an unusual benzoic acid starter unit onto the highly reducing polyketide synthase pks2, followed by oxaloacetate extension and product release to generate a tricarboxylic acid containing product. The phenylalanine ammonia lyase (PAL) M7 and the acyl-CoA ligase M9 are involved in transforming phenylalanine into benzoyl-CoA. The citrate synthase-like protein R3 is involved in connecting the C-alpha-carbons of the hexaketide chain and oxaloacetate to afford the tricarboxylic acid unit. The potential hydrolytic enzymes, M8 and M10, are in close proximity to pks2 and may participate in product release. On the other side, the tetraketide arm is synthesized by a the squalestatin tetraketide synthase pks1 and enzymatically esterified to the core in the last biosynthetic step, by the acetyltransferase M4. The biosynthesis of the tetraketide must involve 3 rounds of chain extension. After the first and second rounds methyl-transfer occurs, and in all rounds of extension the ketoreductase and dehydratase are active. The enoyl reductase and C-MeT of pks1 are not active in the final round of extension. The acetyltransferase M4 appears to have a broad substrate selectivity for its acyl CoA substrate, allowing the in vitro synthesis of novel squalestatins. The biosynthesis of SQS1 requires several oxidative steps likely performed by oxidoreductases M1, R1 and R2. Finally, in support of the identification of the cluster as being responsible for SQS1 production, the cluster contains a gene encoding a putative squalene synthase (SS) R6, suggesting a likely mechanism for self-resistance. The protein is Probable carboxylesterase M8 of Phoma sp. (strain ATCC 20986 / MF5453).